A 371-amino-acid chain; its full sequence is MSEKINLMDLTRQQMREFFKELGEKPFRADQLVKWIYHFGEDNFDNMTNINKKLREKLKQVAEIKAPEVAVEQRSSDGTIKWAMQVGDQQVETVYIPEADRATLCVSSQVGCALACTFCSTAQQGFNRNLTVSEIIGQVWRASKIIGNFGVTGIRPITNVVMMGMGEPLLNMANVVPAMEIMLDDFAYGLSKRRVTISTSGVVPALDKLPEMIDVALAISLHAPNDELRDEIVPINKKYNIKMLMDSVNRYLSVSNANHGKVTIEYVLLDHVNDGTEHAHQLADVLKNTPCKINLIPWNPFPEAPYAKSSNSRVDRFQKTLMEYGFTVTVRKTRGDDIDAACGQLAGDVIDRTKRTAQKKQFGQVIGVVNQ.

Glutamate 92 serves as the catalytic Proton acceptor. One can recognise a Radical SAM core domain in the interval 98-337; that stretch reads EADRATLCVS…VTVRKTRGDD (240 aa). The cysteines at positions 105 and 342 are disulfide-linked. [4Fe-4S] cluster-binding residues include cysteine 112, cysteine 116, and cysteine 119. S-adenosyl-L-methionine-binding positions include 166–167, serine 198, 220–222, and asparagine 299; these read GE and SLH. Catalysis depends on cysteine 342, which acts as the S-methylcysteine intermediate.

Belongs to the radical SAM superfamily. RlmN family. [4Fe-4S] cluster is required as a cofactor.

The protein localises to the cytoplasm. It catalyses the reaction adenosine(2503) in 23S rRNA + 2 reduced [2Fe-2S]-[ferredoxin] + 2 S-adenosyl-L-methionine = 2-methyladenosine(2503) in 23S rRNA + 5'-deoxyadenosine + L-methionine + 2 oxidized [2Fe-2S]-[ferredoxin] + S-adenosyl-L-homocysteine. The enzyme catalyses adenosine(37) in tRNA + 2 reduced [2Fe-2S]-[ferredoxin] + 2 S-adenosyl-L-methionine = 2-methyladenosine(37) in tRNA + 5'-deoxyadenosine + L-methionine + 2 oxidized [2Fe-2S]-[ferredoxin] + S-adenosyl-L-homocysteine. In terms of biological role, specifically methylates position 2 of adenine 2503 in 23S rRNA and position 2 of adenine 37 in tRNAs. m2A2503 modification seems to play a crucial role in the proofreading step occurring at the peptidyl transferase center and thus would serve to optimize ribosomal fidelity. The protein is Dual-specificity RNA methyltransferase RlmN of Actinobacillus succinogenes (strain ATCC 55618 / DSM 22257 / CCUG 43843 / 130Z).